Consider the following 247-residue polypeptide: MTQIAQLSEAEIEARFRVMGTKPVAFLIAGFAKEREPFSVHFGAGGEMFLTTPLAVEPEKGLLIFDCSGSVESNQRFLRSDRNIFIGRPGGVHVQFTTGAAREVAHEGGKAFAVALPQYIVRLQRREYFRVETPRVNPLEFFGRLADGSLLKLPVHDISISGLGVDAAVLPEGVMPGVVLPNCHFSLPGDGKDMFFSATIRNTLELERRSGARHWRIGMQFNDLSSGDETRIQRYIARIERERHELS.

The PilZ domain occupies 124–237 (QRREYFRVET…DETRIQRYIA (114 aa)).

The protein belongs to the YcgR family. As to quaternary structure, monomer. Interacts with the flagellar basal bodies.

It localises to the bacterial flagellum basal body. Acts as a flagellar brake, regulating swimming and swarming in a bis-(3'-5') cyclic diguanylic acid (c-di-GMP)-dependent manner. Binds 1 c-di-GMP dimer per subunit. Increasing levels of c-di-GMP lead to decreased motility. This chain is Flagellar brake protein YcgR 2, found in Dechloromonas aromatica (strain RCB).